Consider the following 269-residue polypeptide: 4-hydroxy-tetrahydrodipicolinate reductase (269 aa).

NAD(+)-binding positions include 11-16 (GASGRM) and Glu37. Position 38 (Arg38) interacts with NADP(+). NAD(+)-binding positions include 101-103 (GTT) and 125-128 (AGNM). The Proton donor/acceptor role is filled by His158. Residue His159 coordinates (S)-2,3,4,5-tetrahydrodipicolinate. The active-site Proton donor is Lys162. (S)-2,3,4,5-tetrahydrodipicolinate is bound at residue 168–169 (GT).

Belongs to the DapB family.

It is found in the cytoplasm. It catalyses the reaction (S)-2,3,4,5-tetrahydrodipicolinate + NAD(+) + H2O = (2S,4S)-4-hydroxy-2,3,4,5-tetrahydrodipicolinate + NADH + H(+). The enzyme catalyses (S)-2,3,4,5-tetrahydrodipicolinate + NADP(+) + H2O = (2S,4S)-4-hydroxy-2,3,4,5-tetrahydrodipicolinate + NADPH + H(+). It participates in amino-acid biosynthesis; L-lysine biosynthesis via DAP pathway; (S)-tetrahydrodipicolinate from L-aspartate: step 4/4. Catalyzes the conversion of 4-hydroxy-tetrahydrodipicolinate (HTPA) to tetrahydrodipicolinate. This Ruegeria pomeroyi (strain ATCC 700808 / DSM 15171 / DSS-3) (Silicibacter pomeroyi) protein is 4-hydroxy-tetrahydrodipicolinate reductase.